The chain runs to 255 residues: F-box/SPRY domain-containing protein 1 (255 aa).

The region spanning 3 to 51 (DRVAALCNYNVLEVVFSYLDLNDLGRCSQVCKSWFHFLNDENSDVWRFH) is the F-box domain. In terms of domain architecture, B30.2/SPRY spans 61–253 (TKSELLSPVP…VSMVYCGTPL (193 aa)).

Belongs to the FBXO45/Fsn family. Component of an E3 ubiquitin ligase complex composed of hiw and Fsn.

The protein localises to the synapse. It participates in protein modification; protein ubiquitination. Required in the presynaptic motoneuron to down-regulate the levels of wnd and restrain synaptic terminal growth at the neuromuscular junction (NMJ). The sequence is that of F-box/SPRY domain-containing protein 1 from Drosophila persimilis (Fruit fly).